A 231-amino-acid polypeptide reads, in one-letter code: Small ribosomal subunit protein uS3 (231 aa).

Positions 18-97 constitute a KH type-2 domain; it reads VDEYLAKQFY…NPELNARVMA (80 aa).

The protein belongs to the universal ribosomal protein uS3 family. In terms of assembly, part of the 30S ribosomal subunit.

Its function is as follows. Binds the lower part of the 30S subunit head. This is Small ribosomal subunit protein uS3 from Sulfolobus acidocaldarius (strain ATCC 33909 / DSM 639 / JCM 8929 / NBRC 15157 / NCIMB 11770).